A 234-amino-acid chain; its full sequence is 2-C-methyl-D-erythritol 4-phosphate cytidylyltransferase (234 aa).

This sequence belongs to the IspD/TarI cytidylyltransferase family. IspD subfamily.

It carries out the reaction 2-C-methyl-D-erythritol 4-phosphate + CTP + H(+) = 4-CDP-2-C-methyl-D-erythritol + diphosphate. It functions in the pathway isoprenoid biosynthesis; isopentenyl diphosphate biosynthesis via DXP pathway; isopentenyl diphosphate from 1-deoxy-D-xylulose 5-phosphate: step 2/6. Functionally, catalyzes the formation of 4-diphosphocytidyl-2-C-methyl-D-erythritol from CTP and 2-C-methyl-D-erythritol 4-phosphate (MEP). The polypeptide is 2-C-methyl-D-erythritol 4-phosphate cytidylyltransferase (Thermosynechococcus vestitus (strain NIES-2133 / IAM M-273 / BP-1)).